The sequence spans 548 residues: (S)-beta-macrocarpene synthase (548 aa).

Mg(2+)-binding residues include Asp302 and Asp306. Residues Asp302, Asp306, Arg443, and Asn446 each contribute to the substrate site. A DDXXD motif motif is present at residues 302–306; sequence DDTLD. Mg(2+)-binding residues include Asn446, Ser450, and Glu454.

It belongs to the terpene synthase family. As to quaternary structure, monomer. The cofactor is Mg(2+). Requires Mn(2+) as cofactor. In terms of tissue distribution, expressed in roots. Not detected in leaves, unless damaged by herbivory or infected by fungi.

Its subcellular location is the cytoplasm. The catalysed reaction is (S)-beta-bisabolene = (S)-beta-macrocarpene. It catalyses the reaction (2E,6E)-farnesyl diphosphate = (S)-beta-bisabolene + diphosphate. The enzyme catalyses (2E)-geranyl diphosphate = (4S)-limonene + diphosphate. It carries out the reaction (2E)-geranyl diphosphate = beta-myrcene + diphosphate. The catalysed reaction is (2E)-geranyl diphosphate = terpinolene + diphosphate. It catalyses the reaction (2E)-geranyl diphosphate + H2O = (S)-linalool + diphosphate. It functions in the pathway secondary metabolite biosynthesis; terpenoid biosynthesis. Functionally, involved in the biosynthesis of the bicyclic sesquiterpene (S)-beta-macrocarpene. Can use both geranyl diphosphate and farnesyl diphosphate as substrate, but not geranylgeranyl diphosphate. Produces mainly (S)-beta-macrocarpene, but also smaller amounts of beta-bisabolene and (E)-beta-farnesene when used with farnesyl diphosphate as substrate. In the presence of geranyl diphosphate, produces the acyclic monoterpenes beta-myrcene and linalool along with minor amounts of the cyclic compounds limonene, alpha-thujene, sabinene and alpha-terpinolene. May be involved in plant defense. The sequence is that of (S)-beta-macrocarpene synthase from Zea mays (Maize).